The sequence spans 361 residues: Nuclear pore complex protein NUP43 (361 aa).

A disordered region spans residues 51-73 (IQSLDPNPRGNHNTNPLIESLSS). WD repeat units lie at residues 132–173 (FHVG…YRKV), 177–215 (NGLV…EAVS), and 225–265 (KTSA…QPIV).

As to quaternary structure, part of the nuclear pore complex (NPC). The NPC has an eight-fold symmetrical structure comprising a central transport channel and two rings, the cytoplasmic and nuclear rings, to which eight filaments are attached. The cytoplasmic filaments have loose ends, while the nuclear filaments are joined in a distal ring, forming a nuclear basket. NPCs are highly dynamic in configuration and composition, and can be devided in 3 subcomplexes, the NUP62 subcomplex, the NUP107-160 subcomplex and the NUP93 subcomplex, containing approximately 30 different nucleoporin proteins.

Its subcellular location is the nucleus envelope. The protein resides in the nucleus. It localises to the nuclear pore complex. This is Nuclear pore complex protein NUP43 from Arabidopsis thaliana (Mouse-ear cress).